The primary structure comprises 605 residues: UvrABC system protein C (605 aa).

Residues 14-92 (QSCGVYKMIG…IKSLKPSYNI (79 aa)) form the GIY-YIG domain. One can recognise a UVR domain in the interval 202-237 (KEVQRQLFSTMEKCSREMNYELAAVYRDRLKFLQQI).

This sequence belongs to the UvrC family. As to quaternary structure, interacts with UvrB in an incision complex.

It is found in the cytoplasm. Functionally, the UvrABC repair system catalyzes the recognition and processing of DNA lesions. UvrC both incises the 5' and 3' sides of the lesion. The N-terminal half is responsible for the 3' incision and the C-terminal half is responsible for the 5' incision. The polypeptide is UvrABC system protein C (Wolbachia pipientis subsp. Culex pipiens (strain wPip)).